A 356-amino-acid polypeptide reads, in one-letter code: Phosphate acyltransferase (356 aa).

This sequence belongs to the PlsX family. Homodimer. Probably interacts with PlsY.

The protein localises to the cytoplasm. It catalyses the reaction a fatty acyl-[ACP] + phosphate = an acyl phosphate + holo-[ACP]. Its pathway is lipid metabolism; phospholipid metabolism. In terms of biological role, catalyzes the reversible formation of acyl-phosphate (acyl-PO(4)) from acyl-[acyl-carrier-protein] (acyl-ACP). This enzyme utilizes acyl-ACP as fatty acyl donor, but not acyl-CoA. This Xanthobacter autotrophicus (strain ATCC BAA-1158 / Py2) protein is Phosphate acyltransferase.